We begin with the raw amino-acid sequence, 129 residues long: Large ribosomal subunit protein bL19 (129 aa).

The protein belongs to the bacterial ribosomal protein bL19 family.

In terms of biological role, this protein is located at the 30S-50S ribosomal subunit interface and may play a role in the structure and function of the aminoacyl-tRNA binding site. The chain is Large ribosomal subunit protein bL19 from Bordetella avium (strain 197N).